Consider the following 1963-residue polypeptide: Myosin-4 (1963 aa).

The Myosin N-terminal SH3-like domain maps to 28–77 (DSKKNVWIPDPEEGYLAGEITATKGDQVTIVTARGNEVTLKKELVQEMNP). The region spanning 81-787 (EKTEDMSNLS…VLAHLEDIRD (707 aa)) is the Myosin motor domain. Lys125 bears the N6,N6,N6-trimethyllysine mark. Residue 174–181 (GESGAGKT) coordinates ATP. 2 actin-binding regions span residues 662–684 (LNNLMTMLNKTHPHFIRCIIPNE) and 766–780 (RIGLTKVFFKAGVLA). The alpha-helical tailpiece (S2) stretch occupies residues 848–1161 (MLKAGKEAEE…LEELGEKLDE (314 aa)). A coiled-coil region spans residues 848 to 1963 (MLKAGKEAEE…SPSRARASDF (1116 aa)). Basic and acidic residues-rich tracts occupy residues 970-988 (LRKAESEKQSKDHQIRSLQ) and 1133-1146 (NERQSRSKADRAKS). Disordered regions lie at residues 970 to 990 (LRKAESEKQSKDHQIRSLQDE) and 1125 to 1146 (SELEEELENERQSRSKADRAKS). Positions 1162–1173 (QGGATAAQVEVN) are hinge. The segment at 1162 to 1963 (QGGATAAQVE…SPSRARASDF (802 aa)) is light meromyosin (LMM). Disordered stretches follow at residues 1317 to 1336 (LTSQLEEARRTADEEARERQ) and 1912 to 1963 (LEDA…ASDF). Residues 1322-1336 (EEARRTADEEARERQ) show a composition bias toward basic and acidic residues.

Belongs to the TRAFAC class myosin-kinesin ATPase superfamily. Myosin family. Muscle myosin is a hexameric protein that consists of 2 heavy chain subunits (MHC), 2 alkali light chain subunits (MLC) and 2 regulatory light chain subunits (MLC-2). Forms a complex composed of chaperone unc-45, unc-54 and ubiquitin-protein ligase ufd-2; promotes poly-ubiquitination of unfolded unc-54. Within the complex interacts with unc-45 (via UCS domain) and ufd-2. Interacts with itr-1 (via c-terminal coiled coil domain). Post-translationally, unfolded unc-54 is poly-ubiquitinated by ufd-2.

The protein localises to the cytoplasm. It is found in the myofibril. In terms of biological role, required for muscle contraction. This is Myosin-4 (unc-54) from Caenorhabditis elegans.